A 757-amino-acid polypeptide reads, in one-letter code: uncharacterized protein (757 aa).

The 70-residue stretch at glycine 640–arginine 709 folds into the S1 motif domain. Over residues leucine 710–arginine 741 the composition is skewed to basic and acidic residues. A disordered region spans residues leucine 710 to arginine 757.

This is an uncharacterized protein from Neisseria meningitidis serogroup A / serotype 4A (strain DSM 15465 / Z2491).